Here is a 109-residue protein sequence, read N- to C-terminus: ATP-dependent Clp protease adapter protein ClpS (109 aa).

Residues 1-20 (MAERKQGGQGNGVGSSVVTE) form a disordered region.

This sequence belongs to the ClpS family. As to quaternary structure, binds to the N-terminal domain of the chaperone ClpA.

Functionally, involved in the modulation of the specificity of the ClpAP-mediated ATP-dependent protein degradation. The sequence is that of ATP-dependent Clp protease adapter protein ClpS from Caulobacter vibrioides (strain NA1000 / CB15N) (Caulobacter crescentus).